The following is a 159-amino-acid chain: Succinate dehydrogenase [ubiquinone] cytochrome b small subunit, mitochondrial (159 aa).

Residues 1–30 (MLQTRLGLGALRQGRLLFAVKSFSTTSVAK) constitute a mitochondrion transit peptide. The Mitochondrial matrix segment spans residues 31 to 65 (IFPPPPQTIKGTVNDAAVFPHHSKLHGSYHWDFER). A helical membrane pass occupies residues 66-82 (IIAIAMVPQVMIPLFTG). Over 83–89 (TSHPLMD) the chain is Mitochondrial intermembrane. The chain crosses the membrane as a helical span at residues 90 to 109 (AALACTLITHAHLGFESCVI). His99 contributes to the heme binding site. Over 110 to 122 (DYFPARRFKKLSP) the chain is Mitochondrial matrix. An a ubiquinone-binding site is contributed by Tyr111. Residues 123 to 140 (LMHWILRGCTVLTLIGVY) traverse the membrane as a helical segment. Over 141–159 (EFNTNDIGLTEGIKKLWKS) the chain is Mitochondrial intermembrane.

The protein belongs to the CybS family. As to quaternary structure, forms part of complex II containing four subunits: a flavoprotein (FP), an iron-sulfur protein (IP) and a cytochrome b composed of a large and a small subunit.

Its subcellular location is the mitochondrion inner membrane. Its pathway is carbohydrate metabolism; tricarboxylic acid cycle. Membrane-anchoring subunit of succinate dehydrogenase (SDH) that is involved in complex II of the mitochondrial electron transport chain and is responsible for transferring electrons from succinate to ubiquinone (coenzyme Q). In Schizosaccharomyces pombe (strain 972 / ATCC 24843) (Fission yeast), this protein is Succinate dehydrogenase [ubiquinone] cytochrome b small subunit, mitochondrial (sdh4).